We begin with the raw amino-acid sequence, 130 residues long: Small ribosomal subunit protein uS9 (130 aa).

It belongs to the universal ribosomal protein uS9 family.

The protein is Small ribosomal subunit protein uS9 of Nitratidesulfovibrio vulgaris (strain ATCC 29579 / DSM 644 / CCUG 34227 / NCIMB 8303 / VKM B-1760 / Hildenborough) (Desulfovibrio vulgaris).